Reading from the N-terminus, the 1921-residue chain is Disks large homolog 5 (1921 aa).

In terms of domain architecture, CARD spans 1–90 (MEPQRRELLA…HLLPILYLNG (90 aa)). The segment at 116–143 (ESSSSLSSVGTTGKAPSPPPLLTEQQAN) is disordered. A coiled-coil region spans residues 139-601 (EQQANDTVEN…KEARFRQLMA (463 aa)). 2 positions are modified to phosphoserine: Ser264 and Ser295. PDZ domains follow at residues 620–710 (VVEF…RRRK) and 705–796 (VVRR…LKVF). Residues 857-898 (ELGHSGGSSSFLHKPFSGSSSPVSPQACPSTSERSLNSFRSD) form a disordered region. Residues 873–898 (SGSSSPVSPQACPSTSERSLNSFRSD) are compositionally biased toward polar residues. A Phosphoserine modification is found at Ser900. The segment at 930–1121 (EVPLDKIDPE…RPKSAPSFRP (192 aa)) is disordered. Thr984 carries the phosphothreonine modification. Ser1000 is subject to Phosphoserine. A Phosphothreonine modification is found at Thr1011. A compositionally biased stretch (basic and acidic residues) spans 1017-1030 (RRSDSIKFQHRLET). Residue Ser1021 is modified to Phosphoserine. Pro residues predominate over residues 1045–1055 (TSPPSAPPPSM). Thr1183 carries the post-translational modification Phosphothreonine. 3 disordered regions span residues 1204–1227 (VLPCGSPPVPRDAGSQSLSPSVQH), 1243–1266 (YSEMRASQGSNSLPSSARLGSSSN), and 1280–1343 (PRYP…KDRP). Phosphoserine is present on Ser1209. Polar residues predominate over residues 1217-1227 (GSQSLSPSVQH). Residues 1252–1266 (SNSLPSSARLGSSSN) show a composition bias toward low complexity. At Ser1263 the chain carries Phosphoserine. Positions 1292-1324 (GSLSHSECSTPPRSPLNIDTLSSCSQPQTTAST) are enriched in polar residues. Position 1334 is a phosphoserine (Ser1334). The 80-residue stretch at 1350 to 1429 (HVKVQKGSEP…TITILAQYNP (80 aa)) folds into the PDZ 3 domain. Composition is skewed to polar residues over residues 1434 to 1443 (LNSHSRSSSH), 1450 to 1460 (PHSTLQGSSAG), and 1483 to 1495 (AKQSASSTRSVGD). Positions 1434–1501 (LNSHSRSSSH…SVGDTTKKTP (68 aa)) are disordered. Positions 1504 to 1585 (RIVFIKKSQL…SLRLKVQYRH (82 aa)) constitute a PDZ 4 domain. The region spanning 1596–1664 (GDSFYIRALY…PSKYVMDQEF (69 aa)) is the SH3 domain. Ser1669 carries the post-translational modification Phosphoserine. Residues 1724–1907 (DSVSLAYQRV…ICTQILAMVS (184 aa)) form the Guanylate kinase-like domain.

This sequence belongs to the MAGUK family. Interacts with MPP1. Interacts with CTNNB1 and with the third SH3 domain of SORBS3 to form a ternary complex. Interacts (via coiled-coil domain) with MARK3. Interacts (via PDZ domain 3) with STK3/MST2 and STK4/MST1. Interacts with SCRIB. Interacts with CTNB1. Interacts with SMO and (via PDZ4 or guanylate kinase-like domain) with KIF7. In terms of tissue distribution, brain (at protein level).

It is found in the cell junction. The protein localises to the cell membrane. Its subcellular location is the postsynaptic density. It localises to the cytoplasm. The protein resides in the cytoskeleton. It is found in the cilium basal body. In terms of biological role, acts as a regulator of the Hippo signaling pathway. Negatively regulates the Hippo signaling pathway by mediating the interaction of MARK3 with STK3/4, bringing them together to promote MARK3-dependent hyperphosphorylation and inactivation of STK3 kinase activity toward LATS1. Positively regulates the Hippo signaling by mediating the interaction of SCRIB with STK4/MST1 and LATS1 which is important for the activation of the Hippo signaling pathway. Involved in regulating cell proliferation, maintenance of epithelial polarity, epithelial-mesenchymal transition (EMT), cell migration and invasion. Plays an important role in dendritic spine formation and synaptogenesis in cortical neurons; regulates synaptogenesis by enhancing the cell surface localization of N-cadherin. Acts as a positive regulator of hedgehog (Hh) signaling pathway. Plays a critical role in the early point of the SMO activity cycle by interacting with SMO at the ciliary base to induce the accumulation of KIF7 and GLI2 at the ciliary tip for GLI2 activation. This is Disks large homolog 5 (Dlg5) from Mus musculus (Mouse).